The chain runs to 316 residues: Acetyl-coenzyme A carboxylase carboxyl transferase subunit beta (316 aa).

Residues 29 to 298 enclose the CoA carboxyltransferase N-terminal domain; sequence LWTKCPNCGV…LLSPLNSHHH (270 aa). Positions 33, 36, 52, and 55 each coordinate Zn(2+). The C4-type zinc-finger motif lies at 33-55; that stretch reads CPNCGVLAYTKDLLANQLVCLDC.

The protein belongs to the AccD/PCCB family. In terms of assembly, acetyl-CoA carboxylase is a heterohexamer composed of biotin carboxyl carrier protein (AccB), biotin carboxylase (AccC) and two subunits each of ACCase subunit alpha (AccA) and ACCase subunit beta (AccD). Zn(2+) is required as a cofactor.

The protein localises to the cytoplasm. The catalysed reaction is N(6)-carboxybiotinyl-L-lysyl-[protein] + acetyl-CoA = N(6)-biotinyl-L-lysyl-[protein] + malonyl-CoA. It participates in lipid metabolism; malonyl-CoA biosynthesis; malonyl-CoA from acetyl-CoA: step 1/1. Functionally, component of the acetyl coenzyme A carboxylase (ACC) complex. Biotin carboxylase (BC) catalyzes the carboxylation of biotin on its carrier protein (BCCP) and then the CO(2) group is transferred by the transcarboxylase to acetyl-CoA to form malonyl-CoA. This is Acetyl-coenzyme A carboxylase carboxyl transferase subunit beta from Microcystis aeruginosa (strain NIES-843 / IAM M-2473).